The primary structure comprises 144 residues: Bacilliredoxin BH1716 (144 aa).

The protein belongs to the bacilliredoxin family.

The sequence is that of Bacilliredoxin BH1716 from Halalkalibacterium halodurans (strain ATCC BAA-125 / DSM 18197 / FERM 7344 / JCM 9153 / C-125) (Bacillus halodurans).